We begin with the raw amino-acid sequence, 1396 residues long: DNA-directed RNA polymerase subunit beta (1396 aa).

This sequence belongs to the RNA polymerase beta chain family. The RNAP catalytic core consists of 2 alpha, 1 beta, 1 beta' and 1 omega subunit. When a sigma factor is associated with the core the holoenzyme is formed, which can initiate transcription.

It carries out the reaction RNA(n) + a ribonucleoside 5'-triphosphate = RNA(n+1) + diphosphate. In terms of biological role, DNA-dependent RNA polymerase catalyzes the transcription of DNA into RNA using the four ribonucleoside triphosphates as substrates. In Erythrobacter litoralis (strain HTCC2594), this protein is DNA-directed RNA polymerase subunit beta.